We begin with the raw amino-acid sequence, 37 residues long: Large ribosomal subunit protein bL36 (37 aa).

The protein belongs to the bacterial ribosomal protein bL36 family.

This Variovorax paradoxus (strain S110) protein is Large ribosomal subunit protein bL36.